We begin with the raw amino-acid sequence, 511 residues long: MTQYRITFEGPVILGAGLAGLTAALSATTGAAKTALVLSPTPLASGCSSAWAQGGMAAALSGDDSPALHAADTIAAGAGLCDPQAVDLLTREGPQAVRDLAALGAPFDRKADDGFVLSLEAAHSAARVARVGGDGAGAAIMAAVIAAVRATPGIEVRENARARRLLQDANGRVVGVLADVDGALVEIRSTAVILATGGVGGLYAVTTTPAQVRGEGLGLAALAGAMIADPEFVQFHPTAIDIGRDPAPLATEALRGEGAILRNADGKAFMADYHPAKELAPRDVVARALHAERAAGRGAFLDATAAVGAHFPHEFPAVFEACMSAGIDPRRQMIPVTPAVHYHMGGVATDLDGRASLPGLYAAGECASTGVQGANRLASNSLLEAAVFGARAGRAAAAEGATGGPPVSLEPLPDLPDAALQGLRKAMSRDAGVIRDADGLTRLLGEIETLEAGHGQGPILVAARLIVTAALAREESRGGHCRIDFPATDPVGVRTFVTLDGREPGLRYAAE.

FAD-binding positions include 16-19 (AGLA) and 48-55 (SSAWAQGG). Residue R282 is the Proton donor/acceptor of the active site. Residues E365 and 381–382 (SL) each bind FAD.

This sequence belongs to the FAD-dependent oxidoreductase 2 family. NadB subfamily. FAD serves as cofactor.

It localises to the cytoplasm. It catalyses the reaction L-aspartate + O2 = iminosuccinate + H2O2. It participates in cofactor biosynthesis; NAD(+) biosynthesis; iminoaspartate from L-aspartate (oxidase route): step 1/1. In terms of biological role, catalyzes the oxidation of L-aspartate to iminoaspartate, the first step in the de novo biosynthesis of NAD(+). In Caulobacter vibrioides (strain ATCC 19089 / CIP 103742 / CB 15) (Caulobacter crescentus), this protein is L-aspartate oxidase (nadB).